We begin with the raw amino-acid sequence, 338 residues long: DNA-directed RNA polymerase subunit alpha (338 aa).

Residues 1–225 form an alpha N-terminal domain (alpha-NTD) region; that stretch reads MLISQRPTIT…ELFGLARELN (225 aa). The segment at 242–338 is alpha C-terminal domain (alpha-CTD); the sequence is YIAAYSMPIE…YIDVEAEDSE (97 aa). Positions 319–338 are disordered; the sequence is LEGYDAETGGYIDVEAEDSE.

This sequence belongs to the RNA polymerase alpha chain family. As to quaternary structure, homodimer. The RNAP catalytic core consists of 2 alpha, 1 beta, 1 beta' and 1 omega subunit. When a sigma factor is associated with the core the holoenzyme is formed, which can initiate transcription.

It carries out the reaction RNA(n) + a ribonucleoside 5'-triphosphate = RNA(n+1) + diphosphate. DNA-dependent RNA polymerase catalyzes the transcription of DNA into RNA using the four ribonucleoside triphosphates as substrates. The polypeptide is DNA-directed RNA polymerase subunit alpha (Corynebacterium glutamicum (strain ATCC 13032 / DSM 20300 / JCM 1318 / BCRC 11384 / CCUG 27702 / LMG 3730 / NBRC 12168 / NCIMB 10025 / NRRL B-2784 / 534)).